The primary structure comprises 1628 residues: Centrosomal protein of 170 kDa protein B (1628 aa).

Residues 23–73 (IFVGREDCELMLQSRSVDKQHAVINYDSDKDEHRVKDLGSLNGTFVNDVRI) form the FHA domain. 12 disordered regions span residues 136–201 (EHGA…DMTQ), 329–369 (LIRR…SEDP), 415–504 (PRKK…GKNY), 566–586 (SDVRTGKVKNEEEDNLSDAGT), 637–659 (LASEPSVPHKPIMSSTPPVKLSN), 719–739 (EHQGEADPTVPSRTRRLLPQL), 758–842 (ESQR…KKST), 1005–1084 (VSLV…LDFT), 1100–1341 (TVSS…EDEQ), 1379–1405 (AGDGDSQSSSGTGQSTSISSVPNTPAS), 1443–1463 (GSTGLEDFDQNMNDSREDPSK), and 1560–1628 (HLDV…TYIV). Composition is skewed to basic and acidic residues over residues 147–156 (KQDKADKKAT) and 180–201 (KLDKEGRRQDEHYSERPNDMTQ). The span at 421–434 (QSFTHNANSPQNDT) shows a compositional bias: polar residues. Over residues 436-453 (PVLKAKAEKRKGTLHVEK) the composition is skewed to basic and acidic residues. Positions 454 to 479 (VSTNGMGSTAPASKSLSSPSFPQRSN) are enriched in polar residues. Basic and acidic residues predominate over residues 481-490 (FRREKTEDRI). 2 stretches are compositionally biased toward basic and acidic residues: residues 758-773 (ESQRKSLEEPEKRISE) and 817-828 (WKGEESHSREPS). Residues 1005–1023 (VSLVSDKNVPSHSQKNRIV) show a composition bias toward polar residues. Positions 1045–1056 (ARERLSEKRRTV) are enriched in basic and acidic residues. A compositionally biased stretch (polar residues) spans 1129-1150 (RSSNAQKVQQALTRSNSLSTPR). A compositionally biased stretch (low complexity) spans 1176–1193 (SNISPGTSSANSSSAKSS). Positions 1216-1227 (NVPSDSETTSSV) are enriched in polar residues. Composition is skewed to low complexity over residues 1261–1280 (TQKQTPRPRSSSVKYSSSST), 1312–1328 (ASTATQTSRSSSVSRRQ), and 1381–1398 (DGDSQSSSGTGQSTSISS). A compositionally biased stretch (polar residues) spans 1564–1596 (PSSNKKTSSTILTSNPLSRTTNNSAARTESQTP). Residues 1606 to 1618 (SSSSSSRSPGSSF) show a composition bias toward low complexity.

The protein belongs to the CEP170 family.

The protein localises to the cytoplasm. It localises to the cytoskeleton. In terms of biological role, plays a role in microtubule organization. This is Centrosomal protein of 170 kDa protein B (cep170b) from Xenopus tropicalis (Western clawed frog).